A 429-amino-acid chain; its full sequence is MRDALNTGLIEFLKASPTPFHATASLVQRLEAAGYKRLDERDSWDPETGGRYYVTRNDSSIIAIKLGKQSPLLNGIRMVGAHTDSPCLRVKPQPELQRQGFLQLGVEVYGGALLAPWFDRDLSLAGRVTYRRDGKVESQLIDFKLPIAIIPNLAIHLNRTANEGWAINPQNELPPILAQVAGDERIDFRALLTEQLAREHELIADVVLDYELSFYDTQDAALIGLNGDFIAGARLDNLLSCYAGLQALLAADSDETCVLVCNDHEEVGSCSACGADGPMLEQTLQRLLPDGDTYVRTLQRSLMVSADNAHGVHPNYADKHDGNHGPKLNAGPVIKVNNNQRYATNSETAGFFRHLCMAEEVPVQSFVVRSDMGCGSTIGPITASHLGVRTVDIGLPTFAMHSIRELCGSHDLAHLVKVLTAFYRSRELP.

His82, His156, and His401 together coordinate Zn(2+).

The protein belongs to the peptidase M18 family. Requires Zn(2+) as cofactor.

This is Probable M18 family aminopeptidase 2 from Pseudomonas putida (strain ATCC 700007 / DSM 6899 / JCM 31910 / BCRC 17059 / LMG 24140 / F1).